A 110-amino-acid polypeptide reads, in one-letter code: UPF0145 protein (110 aa).

It belongs to the UPF0145 family.

The chain is UPF0145 protein from Listeria welshimeri.